Reading from the N-terminus, the 306-residue chain is Aspartate carbamoyltransferase catalytic subunit (306 aa).

Positions 49 and 50 each coordinate carbamoyl phosphate. Lys-77 lines the L-aspartate pocket. Carbamoyl phosphate is bound by residues Arg-99, His-127, and Gln-130. L-aspartate is bound by residues Arg-160 and Arg-211. The carbamoyl phosphate site is built by Ala-250 and Pro-251.

This sequence belongs to the aspartate/ornithine carbamoyltransferase superfamily. ATCase family. As to quaternary structure, heterododecamer (2C3:3R2) of six catalytic PyrB chains organized as two trimers (C3), and six regulatory PyrI chains organized as three dimers (R2).

It carries out the reaction carbamoyl phosphate + L-aspartate = N-carbamoyl-L-aspartate + phosphate + H(+). It participates in pyrimidine metabolism; UMP biosynthesis via de novo pathway; (S)-dihydroorotate from bicarbonate: step 2/3. In terms of biological role, catalyzes the condensation of carbamoyl phosphate and aspartate to form carbamoyl aspartate and inorganic phosphate, the committed step in the de novo pyrimidine nucleotide biosynthesis pathway. This is Aspartate carbamoyltransferase catalytic subunit from Bacillus licheniformis (strain ATCC 14580 / DSM 13 / JCM 2505 / CCUG 7422 / NBRC 12200 / NCIMB 9375 / NCTC 10341 / NRRL NRS-1264 / Gibson 46).